The chain runs to 291 residues: Bifunctional protein FolD (291 aa).

Residues 168 to 170 (GRG), threonine 195, and valine 236 each bind NADP(+).

It belongs to the tetrahydrofolate dehydrogenase/cyclohydrolase family. As to quaternary structure, homodimer.

It carries out the reaction (6R)-5,10-methylene-5,6,7,8-tetrahydrofolate + NADP(+) = (6R)-5,10-methenyltetrahydrofolate + NADPH. The enzyme catalyses (6R)-5,10-methenyltetrahydrofolate + H2O = (6R)-10-formyltetrahydrofolate + H(+). The protein operates within one-carbon metabolism; tetrahydrofolate interconversion. Catalyzes the oxidation of 5,10-methylenetetrahydrofolate to 5,10-methenyltetrahydrofolate and then the hydrolysis of 5,10-methenyltetrahydrofolate to 10-formyltetrahydrofolate. This chain is Bifunctional protein FolD, found in Bifidobacterium adolescentis (strain ATCC 15703 / DSM 20083 / NCTC 11814 / E194a).